An 812-amino-acid chain; its full sequence is Valine--tRNA ligase (812 aa).

Positions P46–H56 match the 'HIGH' region motif. Residues K536 to S540 carry the 'KMSKS' region motif. Position 539 (K539) interacts with ATP.

The protein belongs to the class-I aminoacyl-tRNA synthetase family. ValS type 2 subfamily. In terms of assembly, monomer.

The protein localises to the cytoplasm. It carries out the reaction tRNA(Val) + L-valine + ATP = L-valyl-tRNA(Val) + AMP + diphosphate. Catalyzes the attachment of valine to tRNA(Val). As ValRS can inadvertently accommodate and process structurally similar amino acids such as threonine, to avoid such errors, it has a 'posttransfer' editing activity that hydrolyzes mischarged Thr-tRNA(Val) in a tRNA-dependent manner. In Rickettsia bellii (strain OSU 85-389), this protein is Valine--tRNA ligase.